Consider the following 119-residue polypeptide: Large ribosomal subunit protein bL20 (119 aa).

The protein belongs to the bacterial ribosomal protein bL20 family.

Binds directly to 23S ribosomal RNA and is necessary for the in vitro assembly process of the 50S ribosomal subunit. It is not involved in the protein synthesizing functions of that subunit. This is Large ribosomal subunit protein bL20 from Azoarcus sp. (strain BH72).